The sequence spans 227 residues: Cytochrome c oxidase subunit 2 (227 aa).

Residues 1–14 (MAYPFQLGLQDATS) lie on the Mitochondrial intermembrane side of the membrane. A helical transmembrane segment spans residues 15 to 45 (PIMEELLHFHDHTLMIVFLISSLVLYIISLM). At 46–59 (LTTKLTHTSTMDAQ) the chain is on the mitochondrial matrix side. Residues 60–87 (EVETVWTILPAIILILIALPSLRILYMM) traverse the membrane as a helical segment. Residues 88–227 (DEINNPSLTV…YFETWSAVMV (140 aa)) lie on the Mitochondrial intermembrane side of the membrane. Cu cation is bound by residues His161, Cys196, Glu198, Cys200, His204, and Met207. Glu198 is a binding site for Mg(2+). Tyr218 bears the Phosphotyrosine mark.

The protein belongs to the cytochrome c oxidase subunit 2 family. As to quaternary structure, component of the cytochrome c oxidase (complex IV, CIV), a multisubunit enzyme composed of 14 subunits. The complex is composed of a catalytic core of 3 subunits MT-CO1, MT-CO2 and MT-CO3, encoded in the mitochondrial DNA, and 11 supernumerary subunits COX4I, COX5A, COX5B, COX6A, COX6B, COX6C, COX7A, COX7B, COX7C, COX8 and NDUFA4, which are encoded in the nuclear genome. The complex exists as a monomer or a dimer and forms supercomplexes (SCs) in the inner mitochondrial membrane with NADH-ubiquinone oxidoreductase (complex I, CI) and ubiquinol-cytochrome c oxidoreductase (cytochrome b-c1 complex, complex III, CIII), resulting in different assemblies (supercomplex SCI(1)III(2)IV(1) and megacomplex MCI(2)III(2)IV(2)). Found in a complex with TMEM177, COA6, COX18, COX20, SCO1 and SCO2. Interacts with TMEM177 in a COX20-dependent manner. Interacts with COX20. Interacts with COX16. The cofactor is Cu cation.

The protein localises to the mitochondrion inner membrane. It catalyses the reaction 4 Fe(II)-[cytochrome c] + O2 + 8 H(+)(in) = 4 Fe(III)-[cytochrome c] + 2 H2O + 4 H(+)(out). Its function is as follows. Component of the cytochrome c oxidase, the last enzyme in the mitochondrial electron transport chain which drives oxidative phosphorylation. The respiratory chain contains 3 multisubunit complexes succinate dehydrogenase (complex II, CII), ubiquinol-cytochrome c oxidoreductase (cytochrome b-c1 complex, complex III, CIII) and cytochrome c oxidase (complex IV, CIV), that cooperate to transfer electrons derived from NADH and succinate to molecular oxygen, creating an electrochemical gradient over the inner membrane that drives transmembrane transport and the ATP synthase. Cytochrome c oxidase is the component of the respiratory chain that catalyzes the reduction of oxygen to water. Electrons originating from reduced cytochrome c in the intermembrane space (IMS) are transferred via the dinuclear copper A center (CU(A)) of subunit 2 and heme A of subunit 1 to the active site in subunit 1, a binuclear center (BNC) formed by heme A3 and copper B (CU(B)). The BNC reduces molecular oxygen to 2 water molecules using 4 electrons from cytochrome c in the IMS and 4 protons from the mitochondrial matrix. The polypeptide is Cytochrome c oxidase subunit 2 (MT-CO2) (Lycalopex sechurae (Sechuran desert fox)).